Consider the following 1342-residue polypeptide: MVYSYTEKKRIRKDFGKRPQVLDVPYLLSIQLDSFQKFIEQDPEGQYGLEAAFRSVFPIQSYSGNSELQYVSYRLGEPVFDVQECQIRGVTYSAPLRVKLRLVIYEREAPEGTVKDIKEQEVYMGEIPLMTDNGTFVINGTERVIVSQLHRSPGVFFDSDKGKTHSSGKVLYNARIIPYRGSWLDFEFDPKDNLFVRIDRRRKLPATIILRALNYTTEQILDLFFEKVIFEIRDNKLQMELVPERLRGETASFDIEANGKVYVEKGRRITARHIRQLEKDDVKLIEVPVEYIAGKVVAKDYIDESTGELICAANMELSLDLLAKLSQSGHKRIETLFTNDLDHGPYISETLRVDPTNDRLSALVEIYRMMRPGEPPTREAAESLFENLFFSEDRYDLSAVGRMKFNRSLLREEIEGSGILSKDDIIDVMKKLIDIRNGKGEVDDIDHLGNRRIRSVGEMAENQFRVGLVRVERAVKERLSLGDLDTLMPQDMINAKPISAAVKEFFGSSQLSQFMDQNNPLSEITHKRRISALGPGGLTRERAGFEVRDVHPTHYGRVCPIETPEGPNIGLINSLSVYAQTNEYGFLETPYRKVTDGVVTDEIHYLSAIEEGNYVIAQANSNLDEEGHFVEDLVTCRSKGESSLFSRDQVDYMDVSTQQVVSVGASLIPFLEHDDANRALMGANMQRQAVPTLRADKPLVGTGMERAVAVDSGVTAVAKRGGVVQYVDASRIVIKVNEDEMYPGEAGIDIYNLTKYTRSNQNTCINQMPCVSLGEPVERGDVLADGPSTDLGELALGQNMRVAFMPWNGYNFEDSILVSERVVQEDRFTTIHIQELACVSRDTKLGPEEITADIPNVGEAALSKLDESGIVYIGAEVTGGDILVGKVTPKGETQLTPEEKLLRAIFGEKASDVKDSSLRVPNGVSGTVIDVQVFTRDGVEKDKRALEIEEMQLKQAKKDLSEELQILEAGLFSRIRAVLVAGGVEAEKLDKLPRDRWLELGLTDEEKQNQLEQLAEQYDELKHEFEKKLEAKRRKITQGDDLAPGVLKIVKGYLAVKRRIQPGDKMAGRHGNKGVISKINPIEDMPYDENGTPVDIVLNPLGVPSRMNIGQILETHLGMAAKGIGDKINAMLKQQQEVAKLREFIQRAYDLGADVRQKVDLSTFSDEEVMRLAENLRKGMPIATPVFDGAKEAEIKELLKLGDLPTSGQIRLYDGRTGEQFERPVTVGYMYMLKLNHLVDDKMHARSTGSYSLVTQQPLGGKAQFGGQRFGEMEVWALEAYGAAYTLQEMLTVKSDDVNGRTKMYKNIVDGNHQMEPGMPESFNVLLKEIRSLGINIELEDE.

Lysine 1022 and lysine 1200 each carry N6-acetyllysine.

Belongs to the RNA polymerase beta chain family. As to quaternary structure, the RNAP catalytic core consists of 2 alpha, 1 beta, 1 beta' and 1 omega subunit. When a sigma factor is associated with the core the holoenzyme is formed, which can initiate transcription.

It carries out the reaction RNA(n) + a ribonucleoside 5'-triphosphate = RNA(n+1) + diphosphate. Its function is as follows. DNA-dependent RNA polymerase catalyzes the transcription of DNA into RNA using the four ribonucleoside triphosphates as substrates. The sequence is that of DNA-directed RNA polymerase subunit beta from Shigella flexneri serotype 5b (strain 8401).